We begin with the raw amino-acid sequence, 290 residues long: MRIADYSVTKAVLERHGFTFKKSFGQNFLTDTNILQKIVDTAEIDDQVNVIEIGPGIGALTEFLAERAAQVMAFEIDHRLVPILADTLRDFDNVTVVNEDILKVDLAQHIQNFKNPNLPIKVVANLPYYITTPILMHLIESGIPFSEFVVMMQKEVADRISAQPNTKAYGSLSIAVQYYMTAKVAFIVPRTVFVPAPNVDSAILKMVRRPEPAVAVEDENFFFKVSKASFTHRRKTLWNNLTGYFGKTEEVKDKLTKALDQAGLSPSVRGEALSLAEFAGLADALKGQGL.

6 residues coordinate S-adenosyl-L-methionine: N27, L29, G54, E75, D100, and N125.

This sequence belongs to the class I-like SAM-binding methyltransferase superfamily. rRNA adenine N(6)-methyltransferase family. RsmA subfamily.

Its subcellular location is the cytoplasm. The catalysed reaction is adenosine(1518)/adenosine(1519) in 16S rRNA + 4 S-adenosyl-L-methionine = N(6)-dimethyladenosine(1518)/N(6)-dimethyladenosine(1519) in 16S rRNA + 4 S-adenosyl-L-homocysteine + 4 H(+). Functionally, specifically dimethylates two adjacent adenosines (A1518 and A1519) in the loop of a conserved hairpin near the 3'-end of 16S rRNA in the 30S particle. May play a critical role in biogenesis of 30S subunits. In Streptococcus pneumoniae (strain ATCC BAA-255 / R6), this protein is Ribosomal RNA small subunit methyltransferase A.